The sequence spans 221 residues: Putative hemin import ATP-binding protein HrtA (221 aa).

Positions 3 to 221 (LVVKDIVKNF…IELEDGKITD (219 aa)) constitute an ABC transporter domain. 39-46 (GASGSGKT) contacts ATP.

It belongs to the ABC transporter superfamily. HrtA family. As to quaternary structure, the complex is composed of two ATP-binding proteins (HrtA), two transmembrane proteins (HrtB) and a solute-binding protein.

It localises to the cell membrane. Functionally, part of the ABC transporter complex hrt involved in hemin import. Responsible for energy coupling to the transport system. The polypeptide is Putative hemin import ATP-binding protein HrtA (hrtA) (Staphylococcus aureus (strain MRSA252)).